Here is a 479-residue protein sequence, read N- to C-terminus: Dynein regulatory complex subunit 4 (479 aa).

Coiled-coil stretches lie at residues 28–93, 117–170, and 210–347; these read RDQL…LADI, RAEA…FNEK, and EVEE…GLKE.

Belongs to the DRC4 family.

Its subcellular location is the cytoplasm. It localises to the cytoskeleton. The protein localises to the flagellum basal body. Its function is as follows. Cytoskeletal linker which probably functions in axonemal and non-axonemal dynein regulation. May play a role in the spermatozoa motility. The polypeptide is Dynein regulatory complex subunit 4 (Drosophila melanogaster (Fruit fly)).